The primary structure comprises 298 residues: (DL)-glycerol-3-phosphatase 1, mitochondrial (298 aa).

Residues 1 to 46 constitute a mitochondrion transit peptide; the sequence is MLTTPTRFVALRIPFRSSNKIPISIAPSPKVFPRKPVIRVPASLRF. Residue aspartate 77 is the Nucleophile of the active site. Positions 77, 79, and 242 each coordinate Mg(2+). Aspartate 79 (proton donor) is an active-site residue.

Belongs to the HAD-like hydrolase superfamily. DOG/GPP family. Mg(2+) serves as cofactor. As to expression, ubiquitous with highest expression in siliques. Mainly restricted to the meristem of immature flower and vascular elements of the root, shoot, leave, siliqua and developing embryo (at the protein level).

It localises to the mitochondrion. The catalysed reaction is sn-glycerol 1-phosphate + H2O = glycerol + phosphate. It carries out the reaction sn-glycerol 3-phosphate + H2O = glycerol + phosphate. It catalyses the reaction 5-amino-6-(5-phospho-D-ribitylamino)uracil + H2O = 5-amino-6-(D-ribitylamino)uracil + phosphate. In terms of biological role, acts as a glycerol-3-phosphatase with higher stereospecificity for L-glycerol-3-phosphate than DL-glycerol-3-phosphate. Can also dephosphorylate in vitro 5-amino-6-(5-phospho-D-ribitylamino)uracil, also known as ARPP. This is (DL)-glycerol-3-phosphatase 1, mitochondrial from Arabidopsis thaliana (Mouse-ear cress).